Consider the following 160-residue polypeptide: Monooxygenase AacuO (160 aa).

It belongs to the avfA family.

Its pathway is secondary metabolite biosynthesis. Its function is as follows. Monooxygenase; part of the gene cluster that mediates the biosynthesis of the tetrahydroxanthone dimer secalonic acid D. The pathway begins with the synthesis of atrochrysone thioester by the polyketide synthase AacuL. The atrochrysone carboxyl ACP thioesterase AacuM then breaks the thioester bond and releases the atrochrysone carboxylic acid from AacuL. Atrochrysone carboxylic acid is decarboxylated by the decarboxylase AacuI, and oxidized by the anthrone oxygenase AacuG to yield emodin. Emodin is then reduced to emodin hydroquinone by a yet unidentified oxidoreductase. A-ring reduction by the short chain dehydrogenase AacuN, dehydration by the scytalone dehydratase-like protein AacuK and probable spontaneous re-oxidation, results in overall deoxygenation to chrysophanol. Baeyer-Villiger oxidation by the Baeyer-Villiger monooxygenase (BVMO) AacuH then yields monodictyphenone. Monodictyphenone is transformed into compounds with the tetrahydroxanthone skeleton via methylesterification by the methyltransferase AacuQ, followed by the action of the flavin-dependent monooxygenase AacuC, the isomerase AacuP, and the short chain dehydrogenase/reductase AacuF or AacuD. AacuF and AacuD should accept the same compound as a substrate but perform the ketoreduction with a different stereoselectivity, thus yielding blennolides B and A, respectively. In the final step of the biosynthesis, the cytochrome P450 monooxygenase AacuE accepts blennolide B and/or blennolide A to conduct the dimerization reaction to furnish the tetrahydroxanthone dimers, secalonic acids D, B, and F. The chain is Monooxygenase AacuO from Aspergillus aculeatus (strain ATCC 16872 / CBS 172.66 / WB 5094).